Reading from the N-terminus, the 221-residue chain is uncharacterized protein (221 aa).

Residues 1-45 (MYAPIRSPITELNESTPSSIPVATSYATCSASFAKLVALLVDDMA) lie on the Extracellular side of the membrane. A helical membrane pass occupies residues 46 to 66 (GLSIVLSEIYIYFKLLFLIVI). The Cytoplasmic portion of the chain corresponds to 67–221 (TESIQNKLED…KYIVVIKVEQ (155 aa)).

It is found in the host membrane. This is an uncharacterized protein from Acidianus filamentous virus 1 (isolate United States/Yellowstone) (AFV-1).